The primary structure comprises 219 residues: NADH-quinone oxidoreductase subunit C (219 aa).

The protein belongs to the complex I 30 kDa subunit family. In terms of assembly, NDH-1 is composed of 14 different subunits. Subunits NuoB, C, D, E, F, and G constitute the peripheral sector of the complex.

The protein resides in the cell inner membrane. It catalyses the reaction a quinone + NADH + 5 H(+)(in) = a quinol + NAD(+) + 4 H(+)(out). NDH-1 shuttles electrons from NADH, via FMN and iron-sulfur (Fe-S) centers, to quinones in the respiratory chain. The immediate electron acceptor for the enzyme in this species is believed to be ubiquinone. Couples the redox reaction to proton translocation (for every two electrons transferred, four hydrogen ions are translocated across the cytoplasmic membrane), and thus conserves the redox energy in a proton gradient. The protein is NADH-quinone oxidoreductase subunit C of Methylorubrum extorquens (strain PA1) (Methylobacterium extorquens).